Reading from the N-terminus, the 210-residue chain is Imidazoleglycerol-phosphate dehydratase (210 aa).

It belongs to the imidazoleglycerol-phosphate dehydratase family.

The protein localises to the cytoplasm. It catalyses the reaction D-erythro-1-(imidazol-4-yl)glycerol 3-phosphate = 3-(imidazol-4-yl)-2-oxopropyl phosphate + H2O. It functions in the pathway amino-acid biosynthesis; L-histidine biosynthesis; L-histidine from 5-phospho-alpha-D-ribose 1-diphosphate: step 6/9. This Mycobacterium marinum (strain ATCC BAA-535 / M) protein is Imidazoleglycerol-phosphate dehydratase.